Reading from the N-terminus, the 423-residue chain is Probable WRKY transcription factor 58 (423 aa).

Disordered stretches follow at residues 91–128 (SSAH…AVHG), 142–171 (RNHY…DGYN), and 215–284 (IYKG…GVST). 2 stretches are compositionally biased toward low complexity: residues 99–111 (QPRQ…PQRP) and 144–162 (HYNN…VVNV). The WRKY 1 DNA-binding region spans 161-225 (NVDKPADDGY…YKGQHDHERP (65 aa)). Acidic residues predominate over residues 259-271 (DDDDDDDEDDEDL). The WRKY 2 DNA-binding region spans 300-365 (SEVDLLDDGY…YEGKHNHDVP (66 aa)).

The protein resides in the nucleus. Its function is as follows. Transcription factor. Interacts specifically with the W box (5'-(T)TGAC[CT]-3'), a frequently occurring elicitor-responsive cis-acting element. The chain is Probable WRKY transcription factor 58 (WRKY58) from Arabidopsis thaliana (Mouse-ear cress).